The following is a 70-amino-acid chain: Brevinin-1S (70 aa).

Residues 1–22 (MFTLKKSLLLLFFLGTINLSLC) form the signal peptide. The propeptide occupies 23 to 44 (EEERNAEEERRDDPEERDVEVE). Cysteines 64 and 70 form a disulfide.

The protein belongs to the frog skin active peptide (FSAP) family. Brevinin subfamily. As to expression, expressed by the skin glands.

It localises to the secreted. Its function is as follows. Antimicrobial peptide. This is Brevinin-1S from Odorrana schmackeri (Schmacker's frog).